Consider the following 241-residue polypeptide: tRNA pseudouridine synthase A (241 aa).

The active-site Nucleophile is the Asp-52. Substrate is bound at residue Tyr-110.

It belongs to the tRNA pseudouridine synthase TruA family. Homodimer.

It catalyses the reaction uridine(38/39/40) in tRNA = pseudouridine(38/39/40) in tRNA. Formation of pseudouridine at positions 38, 39 and 40 in the anticodon stem and loop of transfer RNAs. The protein is tRNA pseudouridine synthase A of Aquifex aeolicus (strain VF5).